Consider the following 4226-residue polypeptide: Guanylate cyclase alpha (4226 aa).

The Cytoplasmic portion of the chain corresponds to 1–104 (MSDSKKHYNE…SFIFKGLYEQ (104 aa)). A helical membrane pass occupies residues 105 to 125 (FLRLPNIWFLLISLLEFIPQY). Topologically, residues 126-131 (QNLSNY) are extracellular. An N-linked (GlcNAc...) asparagine glycan is attached at Asn127. Residues 132–152 (MYYSKHSSFFLLLFFICVSII) form a helical membrane-spanning segment. The Cytoplasmic portion of the chain corresponds to 153 to 337 (KNIYEDSRRS…LGYVNKELNS (185 aa)). The helical transmembrane segment at 338–358 (YTIIGLIFTFICVFISVLFKW) threads the bilayer. At 359-392 (TEDDKFRNGSHFFLITVKDNICESIVKYTLLYSN) the chain is on the extracellular side. The N-linked (GlcNAc...) asparagine glycan is linked to Asn366. Residues 393 to 413 (IIPISILISVDLISILQSILI) traverse the membrane as a helical segment. Residues 414–2083 (ENDNHISTFE…FIYGSKHLYT (1670 aa)) are Cytoplasmic-facing. Disordered stretches follow at residues 552 to 572 (EHSQ…NNIC), 832 to 904 (SSKN…SNND), 968 to 989 (INNN…KSSS), and 1740 to 1765 (NINK…NNSN). The span at 558-570 (DNNNNNDNNNNNN) shows a compositional bias: low complexity. Positions 838-847 (TLDDPTELIS) are enriched in acidic residues. Residues 854–873 (LRDKYEHTSDKKNDTNKNRD) show a composition bias toward basic and acidic residues. Low complexity predominate over residues 874-904 (GANNSNNNNNKDVSNNKNKNNNNYNYNSNND). A compositionally biased stretch (basic and acidic residues) spans 1745–1754 (YKYDKNDKHN). The span at 1755 to 1765 (NNNNNNNNNSN) shows a compositional bias: low complexity. Residues 2084–2104 (ISIILYWNFFKNILLILPIFF) form a helical membrane-spanning segment. The Extracellular portion of the chain corresponds to 2105 to 2119 (YQAYASWSCVKIYPE). Residues 2120 to 2140 (LLYTFFSIFWVFIPIIYYMFL) form a helical membrane-spanning segment. The Cytoplasmic portion of the chain corresponds to 2141-2169 (QHNLNYDILYNIPLFYALSRRRYNMNCFK). The chain crosses the membrane as a helical span at residues 2170-2190 (FLPWIFEAIFYSMIIYFFAYA). The Extracellular segment spans residues 2191–2202 (ALKENSHLNNGE). The chain crosses the membrane as a helical span at residues 2203–2223 (VITINTFGNICFIGCLLISIL). At 2224–2235 (RLFLEGSLWSPS) the chain is on the cytoplasmic side. The chain crosses the membrane as a helical span at residues 2236–2256 (ILITCFGCFLFVFFPSLLFIC). Over 2257–2275 (FAYLSNEYIREVFRQTFLW) the chain is Extracellular. Residues 2276 to 2296 (APLYVLLILWFSTCIISYIFI) form a helical membrane-spanning segment. The Cytoplasmic portion of the chain corresponds to 2297–2787 (NFTKSILFPN…QIHKKNKFYK (491 aa)). The segment at 2477-2505 (NNDNNNDDNDNDNNNNNNNNDNYNNNDHN) is disordered. Positions 2488–2502 (DNNNNNNNNDNYNNN) are enriched in low complexity. A helical membrane pass occupies residues 2788–2808 (TFTPWYRFIFLLLGVFFLYVW). The Extracellular segment spans residues 2809-2828 (KLESSLSQLWNMPSDASTDV). A helical membrane pass occupies residues 2829-2849 (FILFLSLLLELVLLAATVTTF). Over 2850 to 2860 (FSNIFIENFNK) the chain is Cytoplasmic. Residues 2861-2881 (IISAVVILIITYHVVSYSVTH) form a helical membrane-spanning segment. Topologically, residues 2882-2900 (IDGVFQAVLFPLYTFVILR) are extracellular. Residues 2901–2921 (LPFVNAVLCNIIFLGLFIIRF) form a helical membrane-spanning segment. Residues 2922 to 2930 (NGDHFLDKK) lie on the Cytoplasmic side of the membrane. The chain crosses the membrane as a helical span at residues 2931-2951 (GLAHYIPLFIGVDVFVGFVGY). Residues 2952–3008 (RLEYNQRKNFLLEYSVESSRRKQREILNTMLPPFVVDEMIYSELNEEGIPISLKAED) are Extracellular-facing. The chain crosses the membrane as a helical span at residues 3009 to 3029 (ISTVTIIFCDIYDFQNIVASI). A Guanylate cyclase 1 domain is found at 3013–3270 (TIIFCDIYDF…DTVNTASRMK (258 aa)). The Cytoplasmic portion of the chain corresponds to 3030–3738 (EPTRLVEVLD…SNINSIEQAL (709 aa)). Disordered regions lie at residues 3077-3150 (EDEL…FEED) and 3201-3230 (DAND…NNKP). 2 stretches are compositionally biased toward low complexity: residues 3083–3098 (NKYS…NYYY) and 3108–3138 (NNNN…NNVN). Over residues 3140 to 3150 (SDDDGDFFEED) the composition is skewed to acidic residues. The span at 3201–3220 (DANDDTHNVNDSFNNDKAEN) shows a compositional bias: basic and acidic residues. A helical transmembrane segment spans residues 3739–3759 (IIFLVTFVMQTLISSTVSIVF). Residues 3760–3773 (IDHKRATQTLHINY) lie on the Extracellular side of the membrane. The chain crosses the membrane as a helical span at residues 3774-3794 (FAYWSVRSVYTFFGFVLWLLF). The Cytoplasmic segment spans residues 3795–3811 (HYRTRPEVSSLLNIKWM). Residues 3812–3832 (IFFLNLLFISAACVFSIAYLW) form a helical membrane-spanning segment. Residues 3833 to 3840 (AISETDQT) are Extracellular-facing. Residues 3841–3861 (TSYTIWMTNDTIEFFFYLVIL) traverse the membrane as a helical segment. Residues 3862-3871 (HHNTGMLFQT) are Cytoplasmic-facing. A helical transmembrane segment spans residues 3872 to 3892 (CILVDLLFITMSLTFIATSVV). A topological domain (extracellular) is located at residue Lys3893. A helical membrane pass occupies residues 3894 to 3914 (TITTDSTVLLIPWYVAFNLIS). Over 3915 to 4226 (TYCKESIDRR…INVNDRQSNL (312 aa)) the chain is Cytoplasmic. Residues 3970 to 4104 (TFLFADICGF…IDVLTGNLME (135 aa)) enclose the Guanylate cyclase 2 domain. Residues Asp3975, Ile3976, and Asp4019 each contribute to the Mg(2+) site.

This sequence in the N-terminal section; belongs to the cation transport ATPase (P-type) (TC 3.A.3) family. Type IV subfamily. In the C-terminal section; belongs to the adenylyl cyclase class-4/guanylyl cyclase family. The cofactor is Mg(2+). Requires Mn(2+) as cofactor.

The protein resides in the cell membrane. The protein localises to the cytoplasmic vesicle membrane. It carries out the reaction GTP = 3',5'-cyclic GMP + diphosphate. Functionally, catalyzes the synthesis of the second messenger cGMP from GTP. In asexual blood stage schizonts, required for cGMP production which is essential for PKG activation, PKG-dependent Ca(2+) release, and ultimately merozoite egress from host erythrocytes. The chain is Guanylate cyclase alpha from Plasmodium falciparum (isolate 3D7).